The chain runs to 540 residues: Glucose-6-phosphate isomerase (540 aa).

The active-site Proton donor is the glutamate 350. Residues histidine 381 and lysine 503 contribute to the active site.

The protein belongs to the GPI family.

The protein localises to the cytoplasm. The catalysed reaction is alpha-D-glucose 6-phosphate = beta-D-fructose 6-phosphate. The protein operates within carbohydrate biosynthesis; gluconeogenesis. Its pathway is carbohydrate degradation; glycolysis; D-glyceraldehyde 3-phosphate and glycerone phosphate from D-glucose: step 2/4. In terms of biological role, catalyzes the reversible isomerization of glucose-6-phosphate to fructose-6-phosphate. The protein is Glucose-6-phosphate isomerase of Burkholderia mallei (strain NCTC 10247).